Consider the following 746-residue polypeptide: NAD(P)H-quinone oxidoreductase subunit 5, chloroplastic (746 aa).

16 helical membrane passes run 9 to 29 (WIIP…LLLF), 40 to 60 (WTFL…YLSI), 89 to 109 (IDPL…LVLI), 125 to 145 (FAYM…SNLI), 147 to 167 (VYFF…FWFT), 185 to 205 (GDFG…SFEF), 221 to 241 (VNLL…IAKS), 258 to 278 (TPIS…FLVA), 280 to 300 (LLPL…IGII), 327 to 347 (LGYM…FHLI), 354 to 374 (ALLF…VGYS), 396 to 416 (TAFL…CFWS), 425 to 445 (LLFS…TAFY), 547 to 567 (ILFP…IGIP), 608 to 628 (FSVS…KPFY), and 723 to 743 (YLFL…FFYF).

It belongs to the complex I subunit 5 family. NDH is composed of at least 16 different subunits, 5 of which are encoded in the nucleus.

It is found in the plastid. The protein localises to the chloroplast thylakoid membrane. It carries out the reaction a plastoquinone + NADH + (n+1) H(+)(in) = a plastoquinol + NAD(+) + n H(+)(out). The enzyme catalyses a plastoquinone + NADPH + (n+1) H(+)(in) = a plastoquinol + NADP(+) + n H(+)(out). Its function is as follows. NDH shuttles electrons from NAD(P)H:plastoquinone, via FMN and iron-sulfur (Fe-S) centers, to quinones in the photosynthetic chain and possibly in a chloroplast respiratory chain. The immediate electron acceptor for the enzyme in this species is believed to be plastoquinone. Couples the redox reaction to proton translocation, and thus conserves the redox energy in a proton gradient. This Lepidium virginicum (Virginia pepperweed) protein is NAD(P)H-quinone oxidoreductase subunit 5, chloroplastic (ndhF).